The sequence spans 505 residues: Maturase K (505 aa).

Belongs to the intron maturase 2 family. MatK subfamily.

Its subcellular location is the plastid. The protein resides in the chloroplast. Usually encoded in the trnK tRNA gene intron. Probably assists in splicing its own and other chloroplast group II introns. The polypeptide is Maturase K (Nuphar variegata (Yellow pond lily)).